Reading from the N-terminus, the 889-residue chain is Translation initiation factor IF-2 (889 aa).

Residues 158 to 296 are disordered; that stretch reads LKEKQEKRRQ…KYKSDELQSQ (139 aa). Over residues 209 to 228 the composition is skewed to low complexity; the sequence is AAATPATSTAPATTSTTAAT. A compositionally biased stretch (basic and acidic residues) spans 238–270; the sequence is VKPEEKGEKKKKPTKQDAWKDEPVKRREPKARG. Residues 391-560 form the tr-type G domain; that stretch reads PRAPVVTVMG…LLQAEVLELK (170 aa). The G1 stretch occupies residues 400–407; it reads GHVDHGKT. Residue 400–407 coordinates GTP; that stretch reads GHVDHGKT. The tract at residues 425 to 429 is G2; it reads GITQH. The tract at residues 446-449 is G3; it reads DTPG. GTP is bound by residues 446 to 450 and 500 to 503; these read DTPGH and NKMD. The tract at residues 500 to 503 is G4; it reads NKMD. Positions 536-538 are G5; that stretch reads SAK.

The protein belongs to the TRAFAC class translation factor GTPase superfamily. Classic translation factor GTPase family. IF-2 subfamily.

It is found in the cytoplasm. Its function is as follows. One of the essential components for the initiation of protein synthesis. Protects formylmethionyl-tRNA from spontaneous hydrolysis and promotes its binding to the 30S ribosomal subunits. Also involved in the hydrolysis of GTP during the formation of the 70S ribosomal complex. The sequence is that of Translation initiation factor IF-2 from Nitrosomonas europaea (strain ATCC 19718 / CIP 103999 / KCTC 2705 / NBRC 14298).